The chain runs to 243 residues: Small ribosomal subunit protein uS5 (243 aa).

The segment covering 1–10 (MSDNETKETQ) has biased composition (basic and acidic residues). Positions 1–50 (MSDNETKETQVAEETQNTVATESNNEDRKGRRGQRGEGRRGERRNRREEN) are disordered. Over residues 12 to 23 (AEETQNTVATES) the composition is skewed to polar residues. Basic and acidic residues predominate over residues 25–50 (NEDRKGRRGQRGEGRRGERRNRREEN). Residues 55–118 (LLDRVVTINR…LDAKKHMFSV (64 aa)) enclose the S5 DRBM domain.

Belongs to the universal ribosomal protein uS5 family. Part of the 30S ribosomal subunit. Contacts proteins S4 and S8.

With S4 and S12 plays an important role in translational accuracy. Functionally, located at the back of the 30S subunit body where it stabilizes the conformation of the head with respect to the body. This Bifidobacterium longum (strain DJO10A) protein is Small ribosomal subunit protein uS5.